The chain runs to 3364 residues: Salivary gland surface protein 1 (3364 aa).

Beta-propeller regions lie at residues 1–344 (MLRI…VVDA) and 705–1216 (FEQE…LKAL). Residue asparagine 59 is glycosylated (N-linked (GlcNAc...) asparagine). 2 cysteine pairs are disulfide-bonded: cysteine 251–cysteine 297 and cysteine 1128–cysteine 1139. Residues 345–2733 (VEPKLDQGSP…PVSQIDPDGQ (2389 aa)) are rhs/YD-repeats. An N-linked (GlcNAc...) asparagine glycan is attached at asparagine 1149. Residues 1345 to 1494 (NQELVQFLGF…VHVDHVRLSP (150 aa)) are carbohydrate-binding module (CBM). The lectin carbohydrate-recognition domain (lectin-CRD) stretch occupies residues 1575–1715 (HSWVESFSPY…VGIKDVIVME (141 aa)). The segment at 2225–2304 (HDKCDQNLIP…SEKMLEQGYP (80 aa)) is wedge domain. 2 cysteine pairs are disulfide-bonded: cysteine 2253/cysteine 2285 and cysteine 2407/cysteine 2421. The next 5 membrane-spanning stretches (helical) occupy residues 2734–2754 (IAVTLVLMIIGAIVGAYLGAA), 2774–2794 (IGLFAGAIMGAFAVYGGAATF), 2805–2825 (MIAGALATGVISVAGAFLGAA), 2844–2864 (WNGLLSGASIAVSFPSGFVGI), and 2878–2898 (MIYASLMVGGFLLFVYLGGGM). Positions 3126–3216 (YSPDSDGNQI…ARIAPAALRN (91 aa)) are tox-SGS.

Probably cleaved at the C-terminus. As to expression, female saliva (at protein level). Female salivary gland (at protein level). Not detected in female carcass without salivary glands. Not detected in male tissues.

It localises to the cell membrane. It is found in the secreted. Functionally, (Microbial infection) Facilitates, but is not essential for, invasion of salivary glands by Plasmodium gallinaceum. Plays a role in Plasmodium gallinaceum oocyst development in mosquito midgut. Its function is as follows. (Microbial infection) Probably facilitates Zika virus replication in salivary glands. The chain is Salivary gland surface protein 1 from Aedes aegypti (Yellowfever mosquito).